The sequence spans 504 residues: MSVVSSFHQSWKSLILASQRCNTVKQIKSTHSLFIIHGLHRNTYAISKLLTAFLHLPNLNKHFHYASSIFDSIEIPNSFVYDTMIRICSRSSQPHLGLRYFLLMVKEEEEDIAPSYLTFHFLIVACLKACFFSVGKQIHCWVVKNGVFLSDSHVQTGVLRIYVEDKLLLDARKVFDEIPQPDVVKWDVLMNGYVRCGLGSEGLEVFREMLVKGLEPDEFSVTTALTACAQVGALAQGKWIHEFVKKKSWIESDVFVGTALVDMYAKCGCIETAVEVFKKLTRRNVFSWAALIGGYAAYGYAKKAMTCLERLEREDGIKPDSVVLLGVLAACAHGGFLEEGRSMLENMEARYEITPKHEHYSCIVDLMCRAGRLDDALNLIEKMPMKPLASVWGALLNGCRTHKNVELGELAVKNLLDLEKGNVEEEEAALVQLSNIYFSVQRNPEASKVRGMIEQRGVRKTPGWSVLEVDGNVTKFVSGDVSHPNLLQIHTVIHLLSVDALQIL.

PPR repeat units lie at residues 77–107, 115–149, 151–181, 182–216, 217–251, 253–287, 288–319, 320–350, and 356–390; these read NSFVYDTMIRICSRSSQPHLGLRYFLLMVKE, SYLTFHFLIVACLKACFFSVGKQIHCWVVKNGVFL, DSHVQTGVLRIYVEDKLLLDARKVFDEIPQP, DVVKWDVLMNGYVRCGLGSEGLEVFREMLVKGLEP, DEFSVTTALTACAQVGALAQGKWIHEFVKKKSWIE, DVFVGTALVDMYAKCGCIETAVEVFKKLTRRNVFS, WAALIGGYAAYGYAKKAMTCLERLEREDGIKP, DSVVLLGVLAACAHGGFLEEGRSMLENMEAR, and KHEHYSCIVDLMCRAGRLDDALNLIEKMPMKPLAS. Residues 391–470 form a type E motif region; it reads VWGALLNGCR…TPGWSVLEVD (80 aa). Residues 471–501 form a type E(+) motif region; it reads GNVTKFVSGDVSHPNLLQIHTVIHLLSVDAL.

The protein belongs to the PPR family. PCMP-E subfamily.

This Arabidopsis thaliana (Mouse-ear cress) protein is Putative pentatricopeptide repeat-containing protein At3g28640 (PCMP-E79).